The primary structure comprises 219 residues: Histone H1.4 (219 aa).

Over residues 1–15 (MSETAPAAPAAPAPA) the composition is skewed to low complexity. A disordered region spans residues 1–41 (MSETAPAAPAAPAPAEKTPVKKKARKSAGAAKRKASGPPVS). Ser-2 carries the post-translational modification N-acetylserine. Ser-2 is modified (phosphoserine). Position 17 is an N6-acetyllysine (Lys-17). The residue at position 18 (Thr-18) is a Phosphothreonine. Residues 20 to 35 (VKKKARKSAGAAKRKA) are compositionally biased toward basic residues. N6-acetyllysine; alternate is present on Lys-26. Lys-26 bears the N6-methyllysine; alternate mark. The residue at position 34 (Lys-34) is an N6-(beta-hydroxybutyryl)lysine; alternate. Lys-34 carries the post-translational modification N6-succinyllysine; alternate. Position 36 is a phosphoserine (Ser-36). Residues 36-109 (SGPPVSELIT…GASGSFKLNK (74 aa)) form the H15 domain. Residue Lys-52 is modified to N6-(beta-hydroxybutyryl)lysine. Arg-54 carries the citrulline modification. Residues Lys-64, Lys-85, Lys-90, and Lys-106 each carry the N6-(beta-hydroxybutyryl)lysine modification. A disordered region spans residues 91-219 (GTLVQTKGTG…KPKKAPAKKK (129 aa)). Over residues 119–140 (KPKKAGAAKPKKPAGAAKKPKK) the composition is skewed to basic residues. Position 146 is a phosphothreonine (Thr-146). 2 stretches are compositionally biased toward basic residues: residues 149–160 (KGAKKTPKKAKK) and 168–185 (KKAK…KKAP). Ser-187 carries the post-translational modification Phosphoserine. The span at 192 to 219 (KAVKPKAAKPKAAKPKTAKPKKAPAKKK) shows a compositional bias: basic residues.

This sequence belongs to the histone H1/H5 family. In terms of processing, H1 histones are progressively phosphorylated during the cell cycle, becoming maximally phosphorylated during late G2 phase and M phase, and being dephosphorylated sharply thereafter. Post-translationally, acetylated at Lys-26. Deacetylated at Lys-26 by SIRT1. Citrullination at Arg-54 (H1R54ci) by PADI4 takes place within the DNA-binding site of H1 and results in its displacement from chromatin and global chromatin decondensation, thereby promoting pluripotency and stem cell maintenance.

It localises to the nucleus. The protein resides in the chromosome. In terms of biological role, histone H1 protein binds to linker DNA between nucleosomes forming the macromolecular structure known as the chromatin fiber. Histones H1 are necessary for the condensation of nucleosome chains into higher-order structured fibers. Also acts as a regulator of individual gene transcription through chromatin remodeling, nucleosome spacing and DNA methylation. The chain is Histone H1.4 from Oryctolagus cuniculus (Rabbit).